Consider the following 255-residue polypeptide: 5'-nucleotidase SurE (255 aa).

Residues Asp13, Asp14, Ser44, and Asn100 each coordinate a divalent metal cation.

Belongs to the SurE nucleotidase family. A divalent metal cation serves as cofactor.

Its subcellular location is the cytoplasm. The enzyme catalyses a ribonucleoside 5'-phosphate + H2O = a ribonucleoside + phosphate. Functionally, nucleotidase that shows phosphatase activity on nucleoside 5'-monophosphates. The polypeptide is 5'-nucleotidase SurE (Bacteroides fragilis (strain ATCC 25285 / DSM 2151 / CCUG 4856 / JCM 11019 / LMG 10263 / NCTC 9343 / Onslow / VPI 2553 / EN-2)).